A 270-amino-acid polypeptide reads, in one-letter code: tRNA (guanine-N(1)-)-methyltransferase (270 aa).

Residues Gly113 and 133–138 contribute to the S-adenosyl-L-methionine site; that span reads IGDYVL. A disordered region spans residues 251–270; it reads APTEGTGLIHHRDVEGPGEG. The segment covering 260–270 has biased composition (basic and acidic residues); the sequence is HHRDVEGPGEG.

Belongs to the RNA methyltransferase TrmD family. As to quaternary structure, homodimer.

It is found in the cytoplasm. The catalysed reaction is guanosine(37) in tRNA + S-adenosyl-L-methionine = N(1)-methylguanosine(37) in tRNA + S-adenosyl-L-homocysteine + H(+). Specifically methylates guanosine-37 in various tRNAs. This is tRNA (guanine-N(1)-)-methyltransferase from Frankia casuarinae (strain DSM 45818 / CECT 9043 / HFP020203 / CcI3).